The following is a 431-amino-acid chain: Tol-Pal system protein TolB (431 aa).

Positions 1-26 (MSLMTKLGFRALVASCLITAGSAANA) are cleaved as a signal peptide. A disordered region spans residues 411–431 (PQILSVQGGSVREPSWGPFMQ).

The protein belongs to the TolB family. The Tol-Pal system is composed of five core proteins: the inner membrane proteins TolA, TolQ and TolR, the periplasmic protein TolB and the outer membrane protein Pal. They form a network linking the inner and outer membranes and the peptidoglycan layer.

The protein localises to the periplasm. Part of the Tol-Pal system, which plays a role in outer membrane invagination during cell division and is important for maintaining outer membrane integrity. In Burkholderia lata (strain ATCC 17760 / DSM 23089 / LMG 22485 / NCIMB 9086 / R18194 / 383), this protein is Tol-Pal system protein TolB.